Reading from the N-terminus, the 388-residue chain is tRNA (guanine-N(7)-)-methyltransferase non-catalytic subunit (388 aa).

WD repeat units follow at residues 58–102 (VEKR…KGDI), 112–151 (VVPK…AIEM), 153–194 (GAIS…DSFF), and 196–234 (GHTE…APRR). The tract at residues 365–388 (EKKKRRLNEDINGDDGEGPGPSNS) is disordered.

This sequence belongs to the WD repeat TRM82 family. As to quaternary structure, forms a heterodimer with the catalytic subunit.

Its subcellular location is the nucleus. It participates in tRNA modification; N(7)-methylguanine-tRNA biosynthesis. Its function is as follows. Required for the formation of N(7)-methylguanine at position 46 (m7G46) in tRNA. In the complex, it is required to stabilize and induce conformational changes of the catalytic subunit. This Caenorhabditis elegans protein is tRNA (guanine-N(7)-)-methyltransferase non-catalytic subunit.